A 302-amino-acid polypeptide reads, in one-letter code: MGLTKNFAFLVFCCQRYCSMDGEAFEISLLDGEEDRFGGTVVNLMEVESMTIGDFDSKLDVSLKAWKDQGKKGIWIKLPSELSSLVDTAIKKGFTYHHAENEYVMLTFWLPEPPSTLPCNASHRIGIGAFVLNKNGEMLVVQENSGYFKDKNVWKVPTGTIKEGESIWAGAVREVKEETDIDAEFVEVLSFMESHQAVWQRKTDIFFVCELEARTFEIQKQDSEIHAAKWMPVEEYVNQPYHNKEGNEMFKLIANICLKRSREKYTGFVLTTNSAKKSLYCSVDHANLLKETADQASTSLSD.

The 133-residue stretch at 122–254 (SHRIGIGAFV…EGNEMFKLIA (133 aa)) folds into the Nudix hydrolase domain. The Nudix box signature appears at 159–180 (GTIKEGESIWAGAVREVKEETD). Residues glutamate 174 and glutamate 178 each coordinate Mg(2+).

The protein belongs to the Nudix hydrolase family. It depends on Mg(2+) as a cofactor. The cofactor is Mn(2+). In terms of tissue distribution, expressed in roots, stems and leaves.

Its function is as follows. Probably mediates the hydrolysis of some nucleoside diphosphate derivatives. The chain is Nudix hydrolase 5 (NUDT5) from Arabidopsis thaliana (Mouse-ear cress).